An 880-amino-acid polypeptide reads, in one-letter code: Guanine nucleotide-binding protein subunit beta 2 (880 aa).

S24 is modified (phosphoserine). 3 Kelch repeats span residues 291–339 (NIYI…MVNN), 377–425 (HIFF…KIDI), and 501–552 (TVII…LTPS). The disordered stretch occupies residues 624–649 (FNSGSAAQESPKAGASASSASAASFD). Low complexity predominate over residues 638–647 (ASASSASAAS). One copy of the Kelch 4 repeat lies at 691 to 738 (TVVLHGGSNGLNVLDDMWLMDLECETWTPIETFAKADSSEDGDEKLDS).

In terms of assembly, g proteins are composed of 3 units, alpha, beta and gamma. GPB1 interacts with the alpha subunit GPA2.

The protein localises to the cytoplasm. It is found in the mitochondrion. In terms of biological role, beta subunit of a guanine nucleotide-binding protein (G protein). G proteins are involved as modulators or transducers in various transmembrane signaling systems. The beta and gamma chains are required for the GTPase activity, for replacement of GDP by GTP, and for G protein-effector interaction. Involved in the determination of the cAMP level according to nutritional conditions, most probably as a regulator of cAMP phosphodiesterase. Required for the control of pseudohyphal and haploid invasive growth. The chain is Guanine nucleotide-binding protein subunit beta 2 (GPB2) from Saccharomyces cerevisiae (strain ATCC 204508 / S288c) (Baker's yeast).